Consider the following 536-residue polypeptide: CTP synthase (536 aa).

Positions 1–267 (MSKFVFVTGG…CKETLKYLDL (267 aa)) are amidoligase domain. Position 13 (Ser-13) interacts with CTP. Ser-13 provides a ligand contact to UTP. ATP contacts are provided by residues 14-19 (SIGKGI) and Asp-71. Residues Asp-71 and Glu-141 each contribute to the Mg(2+) site. Residues 148–150 (DIE), 188–193 (KTKPTQ), and Lys-224 contribute to the CTP site. UTP is bound by residues 188-193 (KTKPTQ) and Lys-224. The Glutamine amidotransferase type-1 domain maps to 292–534 (KVALVGKYIE…IKASQDKLTQ (243 aa)). Gly-354 lines the L-glutamine pocket. Cys-381 acts as the Nucleophile; for glutamine hydrolysis in catalysis. L-glutamine is bound by residues 382-385 (LGMQ), Glu-405, and Arg-462. Catalysis depends on residues His-507 and Glu-509.

Belongs to the CTP synthase family. As to quaternary structure, homotetramer.

The enzyme catalyses UTP + L-glutamine + ATP + H2O = CTP + L-glutamate + ADP + phosphate + 2 H(+). The catalysed reaction is L-glutamine + H2O = L-glutamate + NH4(+). It catalyses the reaction UTP + NH4(+) + ATP = CTP + ADP + phosphate + 2 H(+). The protein operates within pyrimidine metabolism; CTP biosynthesis via de novo pathway; CTP from UDP: step 2/2. Allosterically activated by GTP, when glutamine is the substrate; GTP has no effect on the reaction when ammonia is the substrate. The allosteric effector GTP functions by stabilizing the protein conformation that binds the tetrahedral intermediate(s) formed during glutamine hydrolysis. Inhibited by the product CTP, via allosteric rather than competitive inhibition. Its function is as follows. Catalyzes the ATP-dependent amination of UTP to CTP with either L-glutamine or ammonia as the source of nitrogen. Regulates intracellular CTP levels through interactions with the four ribonucleotide triphosphates. The polypeptide is CTP synthase (Prochlorococcus marinus (strain AS9601)).